An 802-amino-acid polypeptide reads, in one-letter code: uncharacterized protein (802 aa).

One can recognise an EF-hand 1 domain in the interval 6-41 (SRSEKVKRIFQQFDGNLDGGLSREEMSALVVAVNPR). 7 TPR repeats span residues 229-262 (FDGH…QPTD), 264-296 (RPHF…AESG), 305-338 (PQIY…CPTH), 339-372 (YRAL…KPDY), 373-406 (ADAH…KPGH), 407-440 (VDAL…WPNH), and 442-474 (RAQL…TNRV). The EF-hand 2 domain maps to 595–630 (AIKAINEKILSVLDDSGSGRVDLGMFYAVIAPLCGG).

This is an uncharacterized protein from Arabidopsis thaliana (Mouse-ear cress).